A 548-amino-acid chain; its full sequence is Phenylalanine--tRNA ligase beta subunit (548 aa).

The B5 domain maps to 275 to 350; it reads LKEDVLETTS…IAYGYNKFSG (76 aa). Residues Asp328, Asp334, Glu337, and Glu338 each coordinate Mg(2+).

The protein belongs to the phenylalanyl-tRNA synthetase beta subunit family. Type 2 subfamily. In terms of assembly, tetramer of two alpha and two beta subunits. Mg(2+) is required as a cofactor.

It localises to the cytoplasm. The enzyme catalyses tRNA(Phe) + L-phenylalanine + ATP = L-phenylalanyl-tRNA(Phe) + AMP + diphosphate + H(+). This chain is Phenylalanine--tRNA ligase beta subunit, found in Methanocaldococcus jannaschii (strain ATCC 43067 / DSM 2661 / JAL-1 / JCM 10045 / NBRC 100440) (Methanococcus jannaschii).